The sequence spans 327 residues: Sugar transporter ERD6-like 9 (327 aa).

8 consecutive transmembrane segments (helical) span residues 26-46, 68-88, 102-122, 125-145, 152-172, 180-200, 260-280, and 295-315; these read FLVFTTFIIVSASFSFGVALG, VFGSLLTFGGMIGALFSATIA, VFCISGWLAIALAKNIIWLDL, FFVGIGVGLLSYVVPVYIAEI, GTFTFSNQLLQNCGVATAYYL, IIALIGILPCLIQLVGLFFVP, LTIGIGLMLLQQLSGSAGLGY, and IGMTVLSIVVVPKAILGLILV.

The protein belongs to the major facilitator superfamily. Sugar transporter (TC 2.A.1.1) family.

The protein localises to the membrane. In terms of biological role, sugar transporter. This chain is Sugar transporter ERD6-like 9, found in Arabidopsis thaliana (Mouse-ear cress).